The primary structure comprises 178 residues: ATP synthase subunit delta (178 aa).

Belongs to the ATPase delta chain family. In terms of assembly, F-type ATPases have 2 components, F(1) - the catalytic core - and F(0) - the membrane proton channel. F(1) has five subunits: alpha(3), beta(3), gamma(1), delta(1), epsilon(1). F(0) has three main subunits: a(1), b(2) and c(10-14). The alpha and beta chains form an alternating ring which encloses part of the gamma chain. F(1) is attached to F(0) by a central stalk formed by the gamma and epsilon chains, while a peripheral stalk is formed by the delta and b chains.

It is found in the cell inner membrane. Functionally, f(1)F(0) ATP synthase produces ATP from ADP in the presence of a proton or sodium gradient. F-type ATPases consist of two structural domains, F(1) containing the extramembraneous catalytic core and F(0) containing the membrane proton channel, linked together by a central stalk and a peripheral stalk. During catalysis, ATP synthesis in the catalytic domain of F(1) is coupled via a rotary mechanism of the central stalk subunits to proton translocation. This protein is part of the stalk that links CF(0) to CF(1). It either transmits conformational changes from CF(0) to CF(1) or is implicated in proton conduction. The polypeptide is ATP synthase subunit delta (Pseudomonas syringae pv. tomato (strain ATCC BAA-871 / DC3000)).